The chain runs to 556 residues: Fiber protein (556 aa).

Residues 1–22 are disordered; it reads MKRSRTQYAEEPEENDDFNPVY.

This sequence belongs to the adenoviridae fiber family. As to quaternary structure, homotrimer. Interacts with host receptor CXCAR. Interacts (via N-terminal tail region) with pentons.

It is found in the virion. The protein resides in the host nucleus. In terms of biological role, forms spikes that protrude from each vertex of the icosahedral capsid. Interacts with host receptor CXCAR to provide virion initial attachment to target cell. Fiber proteins are shed during virus entry, when virus is still at the cell surface. The sequence is that of Fiber protein from Human adenovirus A serotype 31 (HAdV-31).